The chain runs to 149 residues: 3-dehydroquinate dehydratase (149 aa).

The Proton acceptor role is filled by Y26. The substrate site is built by N77, H83, and D90. Catalysis depends on H103, which acts as the Proton donor. Residues 104 to 105 and R114 each bind substrate; that span reads LS.

It belongs to the type-II 3-dehydroquinase family. As to quaternary structure, homododecamer.

The catalysed reaction is 3-dehydroquinate = 3-dehydroshikimate + H2O. The protein operates within metabolic intermediate biosynthesis; chorismate biosynthesis; chorismate from D-erythrose 4-phosphate and phosphoenolpyruvate: step 3/7. Its function is as follows. Catalyzes a trans-dehydration via an enolate intermediate. The polypeptide is 3-dehydroquinate dehydratase (Psychromonas ingrahamii (strain DSM 17664 / CCUG 51855 / 37)).